Here is a 327-residue protein sequence, read N- to C-terminus: rRNA 2'-O-methyltransferase fibrillarin (327 aa).

Residues 1–95 (MKPGFSPRGG…NQSGKNVMVE (95 aa)) form a disordered region. The segment covering 7-80 (PRGGGFGGRG…GGNRGRGGGR (74 aa)) has biased composition (gly residues). Asymmetric dimethylarginine is present on residues arginine 8, arginine 15, arginine 21, arginine 24, arginine 28, and arginine 31. Residues lysine 90, lysine 108, and lysine 115 each participate in a glycyl lysine isopeptide (Lys-Gly) (interchain with G-Cter in SUMO2) cross-link. Lysine 108 bears the N6-acetyllysine mark. Position 122 is a phosphoserine (serine 122). N6-acetyllysine is present on lysine 127. Phosphoserine occurs at positions 130 and 132. Glycyl lysine isopeptide (Lys-Gly) (interchain with G-Cter in SUMO2) cross-links involve residues lysine 137, lysine 149, and lysine 164. S-adenosyl-L-methionine is bound by residues 178–179 (TT) and 197–198 (EF). Residues lysine 211 and lysine 212 each carry the N6-acetyllysine modification. Residues 222-223 (DA) and 242-245 (DVAQ) each bind S-adenosyl-L-methionine.

Belongs to the methyltransferase superfamily. Fibrillarin family. As to quaternary structure, component of box C/D small nucleolar ribonucleoprotein (snoRNP) particles that contain SNU13, FBL, NOP5 and NOP56, plus a guide RNA. It is associated with the U3, U8, U13, X and Y small nuclear RNAs. Component of several ribosomal and nucleolar protein complexes. Part of the small subunit (SSU) processome, composed of more than 70 proteins and the RNA chaperone small nucleolar RNA (snoRNA) U3. Interacts with PRMT5 and UTP20. Interacts with DDX5 and C1QBP. Interacts with NOL11. Interacts with PIH1D1. Interacts with RRP1B. Interacts with NOLC1. Interacts with SDE2. Interacts with NOP2 and NOP56. By homology to other fibrillarins, some or all of the N-terminal domain arginines are modified to asymmetric dimethylarginine (DMA). In terms of processing, ubiquitinated. Ubiquitination leads to proteasomal degradation. Deubiquitinated by USP36. Post-translationally, acetylated by CREBBP/CBP, preventing methylation of 'Gln-105' of histone H2A (H2AQ104me), without affecting rRNA methylation. Deacetylation by SIRT7 restores methylation of 'Gln-105' of histone H2A (H2AQ104me).

It is found in the nucleus. The protein resides in the nucleolus. It localises to the nucleoplasm. It carries out the reaction L-glutaminyl-[histone H2A] + S-adenosyl-L-methionine = N(5)-methyl-L-glutaminyl-[histone H2A] + S-adenosyl-L-homocysteine + H(+). The enzyme catalyses a ribonucleotide in rRNA + S-adenosyl-L-methionine = a 2'-O-methylribonucleotide in rRNA + S-adenosyl-L-homocysteine + H(+). The catalysed reaction is a ribonucleotide in U6 snRNA + S-adenosyl-L-methionine = a 2'-O-methylribonucleotide in U6 snRNA + S-adenosyl-L-homocysteine + H(+). In terms of biological role, S-adenosyl-L-methionine-dependent methyltransferase that has the ability to methylate both RNAs and proteins. Involved in pre-rRNA processing by catalyzing the site-specific 2'-hydroxyl methylation of ribose moieties in pre-ribosomal RNA. Site specificity is provided by a guide RNA that base pairs with the substrate. Methylation occurs at a characteristic distance from the sequence involved in base pairing with the guide RNA. Probably catalyzes 2'-O-methylation of U6 snRNAs in box C/D RNP complexes. U6 snRNA 2'-O-methylation is required for mRNA splicing fidelity. Also acts as a protein methyltransferase by mediating methylation of 'Gln-105' of histone H2A (H2AQ104me), a modification that impairs binding of the FACT complex and is specifically present at 35S ribosomal DNA locus. Part of the small subunit (SSU) processome, first precursor of the small eukaryotic ribosomal subunit. During the assembly of the SSU processome in the nucleolus, many ribosome biogenesis factors, an RNA chaperone and ribosomal proteins associate with the nascent pre-rRNA and work in concert to generate RNA folding, modifications, rearrangements and cleavage as well as targeted degradation of pre-ribosomal RNA by the RNA exosome. The sequence is that of rRNA 2'-O-methyltransferase fibrillarin from Mus musculus (Mouse).